The sequence spans 340 residues: HPr kinase/phosphorylase (340 aa).

Active-site residues include His153 and Lys174. 168 to 175 (GRSGIGKS) is an ATP binding site. Mg(2+) is bound at residue Ser175. Asp192 acts as the Proton acceptor; for phosphorylation activity. Proton donor; for dephosphorylation activity in catalysis. The important for the catalytic mechanism of both phosphorylation and dephosphorylation stretch occupies residues 216–225 (MEIRGLGIID). Glu217 contributes to the Mg(2+) binding site. Residue Arg258 is part of the active site. The important for the catalytic mechanism of dephosphorylation stretch occupies residues 279–284 (PIYPGK).

This sequence belongs to the HPrK/P family. Homohexamer. Requires Mg(2+) as cofactor.

It catalyses the reaction [HPr protein]-L-serine + ATP = [HPr protein]-O-phospho-L-serine + ADP + H(+). It carries out the reaction [HPr protein]-O-phospho-L-serine + phosphate + H(+) = [HPr protein]-L-serine + diphosphate. Functionally, catalyzes the ATP- as well as the pyrophosphate-dependent phosphorylation of a specific serine residue in HPr, a phosphocarrier protein of the phosphoenolpyruvate-dependent sugar phosphotransferase system (PTS). HprK/P also catalyzes the pyrophosphate-producing, inorganic phosphate-dependent dephosphorylation (phosphorolysis) of seryl-phosphorylated HPr (P-Ser-HPr). In Chloroherpeton thalassium (strain ATCC 35110 / GB-78), this protein is HPr kinase/phosphorylase.